The sequence spans 37 residues: Large ribosomal subunit protein bL36A (37 aa).

Belongs to the bacterial ribosomal protein bL36 family.

The chain is Large ribosomal subunit protein bL36A from Actinobacillus pleuropneumoniae serotype 5b (strain L20).